Here is a 143-residue protein sequence, read N- to C-terminus: 6,7-dimethyl-8-ribityllumazine synthase (143 aa).

5-amino-6-(D-ribitylamino)uracil contacts are provided by residues Phe-13, Thr-45–Asp-47, and Cys-69–Ile-71. Residue Glu-74–Thr-75 coordinates (2S)-2-hydroxy-3-oxobutyl phosphate. His-77 functions as the Proton donor in the catalytic mechanism. Position 102 (Leu-102) interacts with 5-amino-6-(D-ribitylamino)uracil. Arg-117 is a (2S)-2-hydroxy-3-oxobutyl phosphate binding site.

It belongs to the DMRL synthase family.

The enzyme catalyses (2S)-2-hydroxy-3-oxobutyl phosphate + 5-amino-6-(D-ribitylamino)uracil = 6,7-dimethyl-8-(1-D-ribityl)lumazine + phosphate + 2 H2O + H(+). Its pathway is cofactor biosynthesis; riboflavin biosynthesis; riboflavin from 2-hydroxy-3-oxobutyl phosphate and 5-amino-6-(D-ribitylamino)uracil: step 1/2. Its function is as follows. Catalyzes the formation of 6,7-dimethyl-8-ribityllumazine by condensation of 5-amino-6-(D-ribitylamino)uracil with 3,4-dihydroxy-2-butanone 4-phosphate. This is the penultimate step in the biosynthesis of riboflavin. The protein is 6,7-dimethyl-8-ribityllumazine synthase of Archaeoglobus fulgidus (strain ATCC 49558 / DSM 4304 / JCM 9628 / NBRC 100126 / VC-16).